The chain runs to 874 residues: Eukaryotic translation initiation factor 3 subunit C (874 aa).

A disordered region spans residues 1–70; that stretch reads MSRFFVSGYT…DGRPSGPAYF (70 aa). Residues 14–61 are compositionally biased toward acidic residues; sequence SSEEEDLLSTSEEELLSSSDEGEDNESDSSFFGEDDDESEESSSDDED. Residues 598–774 form the PCI domain; that stretch reads FHQHINLELL…KFISFTSTTE (177 aa). Positions 797 to 874 are disordered; it reads KNEKTQSNGY…SNNDEFQATA (78 aa). Positions 813–848 are enriched in low complexity; sequence KDQQNQQQQNQNQNQQQQQNQQQQQQQQSSQQQSNN. Polar residues predominate over residues 862–874; sequence NVNSNNDEFQATA.

This sequence belongs to the eIF-3 subunit C family. As to quaternary structure, component of the eukaryotic translation initiation factor 3 (eIF-3) complex.

The protein resides in the cytoplasm. Component of the eukaryotic translation initiation factor 3 (eIF-3) complex, which is involved in protein synthesis of a specialized repertoire of mRNAs and, together with other initiation factors, stimulates binding of mRNA and methionyl-tRNAi to the 40S ribosome. The eIF-3 complex specifically targets and initiates translation of a subset of mRNAs involved in cell proliferation. This is Eukaryotic translation initiation factor 3 subunit C from Candida albicans (strain SC5314 / ATCC MYA-2876) (Yeast).